We begin with the raw amino-acid sequence, 198 residues long: Recombination protein RecR (198 aa).

The segment at 56 to 71 (CKVCGNFSEEDECVIC) adopts a C4-type zinc-finger fold. The region spanning 79–174 (GVICVVEEPK…RVSKLASGLP (96 aa)) is the Toprim domain.

The protein belongs to the RecR family.

In terms of biological role, may play a role in DNA repair. It seems to be involved in an RecBC-independent recombinational process of DNA repair. It may act with RecF and RecO. In Tropheryma whipplei (strain TW08/27) (Whipple's bacillus), this protein is Recombination protein RecR.